A 290-amino-acid polypeptide reads, in one-letter code: Ribonuclease HIII (290 aa).

Residues 78–290 (LPLIGTDEVG…FKNTEKAKNA (213 aa)) enclose the RNase H type-2 domain. A divalent metal cation contacts are provided by aspartate 84, glutamate 85, and aspartate 187.

The protein belongs to the RNase HII family. RnhC subfamily. Requires Mn(2+) as cofactor. Mg(2+) is required as a cofactor.

It localises to the cytoplasm. The enzyme catalyses Endonucleolytic cleavage to 5'-phosphomonoester.. In terms of biological role, endonuclease that specifically degrades the RNA of RNA-DNA hybrids. This chain is Ribonuclease HIII, found in Streptococcus pneumoniae (strain P1031).